Consider the following 204-residue polypeptide: Probable GTP-binding protein EngB (204 aa).

Residues 23–195 enclose the EngB-type G domain; that stretch reads TLPEIAFVGR…ASALMQLLAM (173 aa). GTP contacts are provided by residues 31–38, 58–62, 76–79, 143–146, and 174–176; these read GRSNVGKS, GRTRE, DLPG, TKID, and FSA. The Mg(2+) site is built by S38 and T60.

It belongs to the TRAFAC class TrmE-Era-EngA-EngB-Septin-like GTPase superfamily. EngB GTPase family. The cofactor is Mg(2+).

In terms of biological role, necessary for normal cell division and for the maintenance of normal septation. The protein is Probable GTP-binding protein EngB of Gemmatimonas aurantiaca (strain DSM 14586 / JCM 11422 / NBRC 100505 / T-27).